Reading from the N-terminus, the 384-residue chain is Endoglucanase (384 aa).

The N-terminal stretch at 1 to 25 (MTRRRLLHAGTLAGVAALLPAAALA) is a signal peptide. Glutamate 63 serves as the catalytic Proton donor. Aspartate 124 functions as the Nucleophile in the catalytic mechanism.

Belongs to the glycosyl hydrolase 8 (cellulase D) family.

The protein localises to the secreted. It carries out the reaction Endohydrolysis of (1-&gt;4)-beta-D-glucosidic linkages in cellulose, lichenin and cereal beta-D-glucans.. It participates in glycan metabolism; bacterial cellulose biosynthesis. In terms of biological role, hydrolyzes carboxymethylcellulose. This Xanthomonas axonopodis pv. citri (strain 306) protein is Endoglucanase (bcsZ).